We begin with the raw amino-acid sequence, 460 residues long: MAESVDHKELSESNQEELGSQVMAEGPGESQDRSEGVSIEPGDGGQHGEETVAAGVGEEGKGEEAAAGSGEDAGKCGGTDEDSDSDRPKGLIGYLLDTDFVESLPVKVKCRVLALKKLQTRAAHLESKFLREFHDIERKFAEMYQPLLEKRRQIINAVYEPTEEECEYKSDCEDYFEEEMDEEEETNGNEDGMVHEYVDEDDGYEDCYYDYDDEEEEEEEDDSAGATGGEEVNEEDPKGIPDFWLTVLKNVEALTPMIKKYDEPILKLLTDIKVKLSDPGEPLSFTLEFHFKPNEYFKNELLTKTYVLKSKLACYDPHPYRGTAIEYATGCDIDWNEGKNVTLRTIKKKQRHRVWGTVRTVTEDFPKDSFFNFFSPHGISLNGGDENDDFLLGHNLRTYIIPRSVLFFSGDALESQQEGVVREVNDEIYDKIIYDDWMAAIEEVKACCKNLEALVEDIDR.

A compositionally biased stretch (basic and acidic residues) spans 1-11 (MAESVDHKELS). Disordered regions lie at residues 1-87 (MAES…DSDR) and 213-238 (DEEE…EDPK). A compositionally biased stretch (acidic residues) spans 213–223 (DEEEEEEEDDS). A Nuclear localization signal motif is present at residues 346 to 352 (IKKKQRH).

Belongs to the nucleosome assembly protein (NAP) family. In terms of tissue distribution, brain, specifically expressed in neurons.

The protein localises to the nucleus. In terms of biological role, acidic protein which may be involved in interactions with other proteins or DNA. This Mus musculus (Mouse) protein is Nucleosome assembly protein 1-like 2 (Nap1l2).